A 249-amino-acid chain; its full sequence is MAGHSKWANIKHRKAAQDAKRGKIFSKLIRELTVASRQGGGEVADNPRLRAAIDKALANNMTKDTIQRAIERGAGNTDGDEMEETVYEGYGPEGVAVLVECMTDNRNRTVSDVRHAFSKNGGNLGTSGSVAFMFHKQGRLTLPEGVSEETAMEATLAAEPEDIVTQADGTLEVVTSPERFGAVKDALLEADIEPVASDVGLYPDNYTSIDDVETARKVLKLFDMLEDLDDVQNVYSNADFSDAVMAELE.

This sequence belongs to the TACO1 family.

Its subcellular location is the cytoplasm. This is Probable transcriptional regulatory protein Csal_1845 from Chromohalobacter salexigens (strain ATCC BAA-138 / DSM 3043 / CIP 106854 / NCIMB 13768 / 1H11).